Here is a 526-residue protein sequence, read N- to C-terminus: Organic cation/carnitine transporter 4 (526 aa).

Topologically, residues 1–52 (MESPEDRNGNDVRQPLLEKIPVKKEAEGEERLCIDEMLQRYCGEFGRWQLKH) are cytoplasmic. Residues 53-73 (FVLTCIAWALEAFHTMVMIFA) form a helical membrane-spanning segment. Over 74-123 (DQEPEWRCVGSDCRVGSLNCELDPSSWEWTAGKGSSTVSEWGLICGDKYK) the chain is Extracellular. The chain crosses the membrane as a helical span at residues 124 to 144 (VGLVQALFFAGCMIGAGVFGH). Over 145-153 (LSDSKLGRK) the chain is Cytoplasmic. The helical transmembrane segment at 154–174 (GSLTVVCIINAIFGIATAFSP) threads the bilayer. At 175–179 (NYWTY) the chain is on the extracellular side. The chain crosses the membrane as a helical span at residues 180 to 200 (VVLRFLTGFSTGGVGLTAFVL). 201-208 (ATEPIGPS) is a binding site for ATP. Residues 201 to 214 (ATEPIGPSKRGVAG) lie on the Cytoplasmic side of the membrane. Residues 215 to 235 (MSTFYFFSAGIAVLSGIAYVF) traverse the membrane as a helical segment. The Extracellular segment spans residues 236 to 240 (RSWRE). A helical transmembrane segment spans residues 241–261 (LFIVSSLPSLLFLLIVIPFIS). Residues 262 to 331 (ESPRWYLVRG…ILSPLMRMRL (70 aa)) are Cytoplasmic-facing. Residues 332–352 (VISVAISFTVSIVYYGLSLNV) form a helical membrane-spanning segment. The Extracellular segment spans residues 353-360 (GNLKTNLY). A helical membrane pass occupies residues 361-381 (LNVFVNAVSEMPAFAITAVLL). Residues 382 to 390 (DKYGRKPLS) lie on the Cytoplasmic side of the membrane. A helical transmembrane segment spans residues 391–411 (IGTQWFSCVFCLVGFSVWGAG). Residues 412-418 (PWKSVRM) lie on the Extracellular side of the membrane. Residues 419–439 (VSGVLGIFGMAGTYNLLFIYI) form a helical membrane-spanning segment. At 440–451 (AELFPTVVRNAA) the chain is on the cytoplasmic side. Residues 452-472 (LGCATQAAQMGAILAPFVVVL) traverse the membrane as a helical segment. Residues 473–475 (GEE) are Extracellular-facing. Residues 476–496 (LPFGVFAVCGLVGGGLAFYLP) form a helical membrane-spanning segment. The Cytoplasmic segment spans residues 497–526 (ETLNKPLYDTMFGMHEAESESNRERGEVIC).

It belongs to the major facilitator (TC 2.A.1) superfamily. Organic cation transporter (TC 2.A.1.19) family. In terms of tissue distribution, mostly expressed in siliques, and, to a lower extent, in stems, leaves, flowers and siliques. Present in pollen. In the stems of secondary inflorescences present in the phloem cells and xylem parenchyma cells.

The protein resides in the vacuole membrane. Its function is as follows. High affinity carnitine transporter involved in the active cellular uptake of carnitine. Also transports organic cations. This chain is Organic cation/carnitine transporter 4 (OCT4), found in Arabidopsis thaliana (Mouse-ear cress).